We begin with the raw amino-acid sequence, 168 residues long: Urease accessory protein UreE (168 aa).

A disordered region spans residues 145 to 168; it reads EGGAYAAGQGGGHGPHGQHTHPHH.

This sequence belongs to the UreE family.

The protein localises to the cytoplasm. Involved in urease metallocenter assembly. Binds nickel. Probably functions as a nickel donor during metallocenter assembly. The protein is Urease accessory protein UreE of Verminephrobacter eiseniae (strain EF01-2).